We begin with the raw amino-acid sequence, 390 residues long: Ribonuclease D (390 aa).

A 3'-5' exonuclease domain is found at 7 to 173; it reads ITDSATLAAL…TLFPMLLKEL (167 aa). Residues 212 to 293 enclose the HRDC domain; that stretch reads KADILGRLKA…ENAEALRPEE (82 aa).

Belongs to the RNase D family. It depends on a divalent metal cation as a cofactor.

The protein resides in the cytoplasm. The catalysed reaction is Exonucleolytic cleavage that removes extra residues from the 3'-terminus of tRNA to produce 5'-mononucleotides.. In terms of biological role, exonuclease involved in the 3' processing of various precursor tRNAs. Initiates hydrolysis at the 3'-terminus of an RNA molecule and releases 5'-mononucleotides. The sequence is that of Ribonuclease D from Zymomonas mobilis subsp. mobilis (strain ATCC 31821 / ZM4 / CP4).